The sequence spans 975 residues: NLR family member X1 (975 aa).

The transit peptide at 1–86 (MRWGHHLPRA…EAIQRHRRNL (86 aa)) directs the protein to the mitochondrion. A required for interaction with MAVS region spans residues 75–556 (ATEAIQRHRR…RALPLLFNLI (482 aa)). The NACHT domain occupies 160 to 483 (QTVVLYGTVG…LRFFLAPCVE (324 aa)). 166 to 173 (GTVGTGKS) contributes to the ATP binding site. Residues 556–974 (IKVVPRVFGR…ALLEQLGSSG (419 aa)) form a required for the repression of MAVS-induced interferon signaling region. Residues 667–694 (RQVLPPSELLDHLFFHYEFQNQRFSAEV) enclose the LRRNT domain. LRR repeat units follow at residues 695 to 718 (LSSLRQLNLAGVRMTPVKCTVVAA), 724 to 747 (RHALDEVNLASCQLDPAGLRTLLP), 749 to 777 (FLRARKLGLQLNSLGPEACKDLRDLLLHD), 778 to 801 (QCQITTLRLSNNPLTAAGVAVLME), 811 to 834 (HLSLLHTGLGDEGLELLAAQLDRN), 835 to 857 (RQLQELNVAYNGAGDTAALALAR), 858 to 877 (AAREHPSLELLHLYFNELSS), and 878 to 899 (EGRQVLRDLGGAAEGGARVVVS). Positions 906–970 (VSEYWSVILS…GEVRALLEQL (65 aa)) constitute an LRRCT domain.

Belongs to the NLRP family. As to quaternary structure, homohexamer. Interacts with MAVS. Interacts with TUFM. (Microbial infection) Interacts with influenza A virus protein PB1-F2. In terms of tissue distribution, ubiquitously expressed. Strongest expression in mammary gland, heart and muscle. Detected in HeLa, HEK293T, THP-1, HL-60, Raji and Jurkat cell lines (at protein level).

It localises to the mitochondrion outer membrane. Its function is as follows. Participates in antiviral signaling. Acts as a negative regulator of MAVS-mediated antiviral responses, through the inhibition of the virus-induced RLH (RIG-like helicase)-MAVS interaction. Instead, promotes autophagy by interacting with TUFM and subsequently recruiting the autophagy-related proteins ATG5 and ATG12. Also regulates MAVS-dependent NLRP3 inflammasome activation to attenuate apoptosis. Has no inhibitory function on NF-kappa-B signaling pathway, but enhances NF-kappa-B and JUN N-terminal kinase dependent signaling through the production of reactive oxygen species. Regulates viral mediated-inflammation and energy metabolism in a sex-dependent manner. In females, prevents uncontrolled inflammation and energy metabolism and thus, may contribute to the sex differences observed in infectious and inflammatory diseases. In Homo sapiens (Human), this protein is NLR family member X1 (NLRX1).